Reading from the N-terminus, the 809-residue chain is Cyclic nucleotide-gated channel beta-3 (809 aa).

Disordered stretches follow at residues 1–121 (MFKS…PPAA) and 153–178 (GDLS…ESDD). Topologically, residues 1–218 (MFKSLTKVNK…SIDSYTDRLY (218 aa)) are cytoplasmic. Residues 22-31 (QSSRRNEEGS) are compositionally biased toward basic and acidic residues. Over residues 32–43 (HPSNQSQQTTAQ) the composition is skewed to polar residues. Basic and acidic residues predominate over residues 44-53 (EENKGEEKSL). Polar residues predominate over residues 55 to 88 (TKSTPVTSEEPHTNIQDKLSKKNSSGDLTTNPDP). Residues 219–242 (LLWLLLVTLAYNWNCCFIPLRLVF) form a helical membrane-spanning segment. Topologically, residues 243 to 249 (PYQTADN) are extracellular. Residues 250 to 270 (IHYWLIADIICDIIYLYDMLF) form a helical membrane-spanning segment. The Cytoplasmic portion of the chain corresponds to 271-299 (IQPRLQFVRGGDIIVDSNELRKHYRTSTK). A helical transmembrane segment spans residues 300 to 317 (FQLDVASIIPFDICYLFF). The Extracellular portion of the chain corresponds to 318–320 (GFN). A helical transmembrane segment spans residues 321–335 (PMFRANRMLKYTSFF). Residues 336-348 (EFNHHLESIMDKA) lie on the Cytoplasmic side of the membrane. An ion conduction pathway region spans residues 348–447 (AYIYRVIRTT…IGQMRDVIGA (100 aa)). The helical transmembrane segment at 349–371 (YIYRVIRTTGYLLFILHINACVY) threads the bilayer. Topologically, residues 372-393 (YWASNYEGIGTTRWVYDGEGNE) are extracellular. 2 consecutive transmembrane segments (helical) span residues 394–420 (YLRC…LFEI) and 421–445 (VFQL…RDVI). Residues 407-410 (TIGG) are selectivity filter. Residues 446–809 (GAATANQNYF…TIEVKEKAKQ (364 aa)) lie on the Cytoplasmic side of the membrane. Residues 450–526 (ANQNYFRACM…SIISKVDLFK (77 aa)) form a C-linker region. The tract at residues 530–646 (TQMIYDMLLR…ILMKKARVLL (117 aa)) is cyclic nucleotide-binding domain. 3',5'-cyclic GMP-binding residues include glycine 591, glutamate 592, arginine 604, and threonine 605. Residues 698–776 (QAAQKKENSE…PHSVRRTVLP (79 aa)) form a disordered region. Positions 716 to 755 (NEDKQKENEDKQKENEDKGKENEDKDKGREPEEKPLDRPE) are enriched in basic and acidic residues.

The protein belongs to the cyclic nucleotide-gated cation channel (TC 1.A.1.5) family. CNGB3 subfamily. Forms heterotetrameric channels composed of CNGA3 and CNGB3 subunits with 3:1 stoichiometry. Expressed specifically in the retina.

It localises to the cell membrane. It carries out the reaction Ca(2+)(in) = Ca(2+)(out). The catalysed reaction is Na(+)(in) = Na(+)(out). It catalyses the reaction K(+)(in) = K(+)(out). The enzyme catalyses NH4(+)(in) = NH4(+)(out). It carries out the reaction Rb(+)(in) = Rb(+)(out). The catalysed reaction is Li(+)(in) = Li(+)(out). It catalyses the reaction Cs(+)(in) = Cs(+)(out). Pore-forming subunit of the cone cyclic nucleotide-gated channel. Mediates cone photoresponses at bright light converting transient changes in intracellular cGMP levels into electrical signals. In the dark, cGMP levels are high and keep the channel open enabling a steady inward current carried by Na(+) and Ca(2+) ions that leads to membrane depolarization and neurotransmitter release from synaptic terminals. Upon photon absorption cGMP levels decline leading to channel closure and membrane hyperpolarization that ultimately slows neurotransmitter release and signals the presence of light, the end point of the phototransduction cascade. Conducts cGMP- and cAMP-gated ion currents, with permeability for monovalent and divalent cations. The protein is Cyclic nucleotide-gated channel beta-3 of Homo sapiens (Human).